Consider the following 160-residue polypeptide: Eukaryotic translation initiation factor 5A (160 aa).

Basic and acidic residues predominate over residues 1-13; that stretch reads MSDSEEHHFESKA. A disordered region spans residues 1 to 22; it reads MSDSEEHHFESKADAGASKTYP. K53 bears the Hypusine mark.

The protein belongs to the eIF-5A family. Post-translationally, lys-53 undergoes hypusination, a unique post-translational modification that consists in the addition of a butylamino group from spermidine to lysine side chain, leading to the formation of the unusual amino acid hypusine. eIF-5As are the only known proteins to undergo this modification, which is essential for their function.

Functionally, translation factor that promotes translation elongation and termination, particularly upon ribosome stalling at specific amino acid sequence contexts. Binds between the exit (E) and peptidyl (P) site of the ribosome and promotes rescue of stalled ribosome: specifically required for efficient translation of polyproline-containing peptides as well as other motifs that stall the ribosome. Acts as a ribosome quality control (RQC) cofactor by joining the RQC complex to facilitate peptidyl transfer during CAT tailing step. In Zea mays (Maize), this protein is Eukaryotic translation initiation factor 5A (TIF5A).